The sequence spans 60 residues: Mastoparan-VB1 (60 aa).

Residues 1–23 (MKNTILLLFTAFIFLSGFFGMSA) form the signal peptide. Positions 24–45 (EALADPKADPLAGPFPDADPDP) are excised as a propeptide. 4 AXPX repeats span residues 27–30 (ADPK), 31–34 (ADPL), 35–38 (AGPF), and 40–43 (DADP). The residue at position 59 (Leu-59) is a Leucine amide.

In terms of tissue distribution, expressed by the venom gland.

The protein localises to the secreted. Its subcellular location is the target cell membrane. Its function is as follows. Antimicrobial peptide. Shows activity against both Gram-positive (S.aureus MIC=1.9-3.75 ug/ml) and -negative (E.coli MIC=15-60 ug/ml) bacteria, as well against fungi (C.albicans MIC=15 ug/ml). Also promotes moderate mast cell degranulation. Does not show hemolytic activity on rabbit and human erythrocytes. Its mast cell degranulation activity may be related to the activation of G-protein coupled receptors in mast cells as well as interaction with other proteins located in cell endosomal membranes in the mast cells. This chain is Mastoparan-VB1, found in Vespa bicolor (Black shield wasp).